Here is a 1179-residue protein sequence, read N- to C-terminus: DNA-directed RNA polymerase subunit beta (1179 aa).

Residues 1153 to 1162 are compositionally biased toward acidic residues; sequence MREMEDEDEG. The segment at 1153–1179 is disordered; the sequence is MREMEDEDEGNGEKLNLVLEGGSLNEE.

This sequence belongs to the RNA polymerase beta chain family. As to quaternary structure, the RNAP catalytic core consists of 2 alpha, 1 beta, 1 beta' and 1 omega subunit. When a sigma factor is associated with the core the holoenzyme is formed, which can initiate transcription.

It catalyses the reaction RNA(n) + a ribonucleoside 5'-triphosphate = RNA(n+1) + diphosphate. Its function is as follows. DNA-dependent RNA polymerase catalyzes the transcription of DNA into RNA using the four ribonucleoside triphosphates as substrates. This is DNA-directed RNA polymerase subunit beta from Brevibacillus brevis (strain 47 / JCM 6285 / NBRC 100599).